The sequence spans 87 residues: MTALFYLLFLTSVIIETHQECDMEKLDGDFPRQNNGYLYVCKDVETCFHICEERDLNRNHAKCCYENCFCEHLHGEKIRKQNVSLKI.

Positions 1–19 (MTALFYLLFLTSVIIETHQ) are cleaved as a signal peptide. Intrachain disulfides connect Cys41-Cys63, Cys47-Cys68, and Cys51-Cys70.

The protein belongs to the long (4 C-C) scorpion toxin superfamily. Sodium channel inhibitor family. In terms of tissue distribution, expressed by the venom gland.

The protein resides in the secreted. Functionally, putative sodium channel toxin. In Tityus serrulatus (Brazilian scorpion), this protein is Putative sodium channel toxin Ts40.